A 470-amino-acid polypeptide reads, in one-letter code: GTPase Der (470 aa).

EngA-type G domains follow at residues 32-195 (PVVA…PTIS) and 206-379 (RRVA…KSWD). GTP contacts are provided by residues 38–45 (GRPNVGKS), 85–89 (DTGGW), 147–150 (NKVD), 212–219 (GKPNVGKS), 259–263 (DTAGL), and 324–327 (NKWD). Positions 380–462 (TRVSTGRLNT…PIRINVRVRE (83 aa)) constitute a KH-like domain.

The protein belongs to the TRAFAC class TrmE-Era-EngA-EngB-Septin-like GTPase superfamily. EngA (Der) GTPase family. Associates with the 50S ribosomal subunit.

GTPase that plays an essential role in the late steps of ribosome biogenesis. This chain is GTPase Der, found in Mycolicibacterium vanbaalenii (strain DSM 7251 / JCM 13017 / BCRC 16820 / KCTC 9966 / NRRL B-24157 / PYR-1) (Mycobacterium vanbaalenii).